The primary structure comprises 830 residues: Interleukin-4 receptor subunit alpha (830 aa).

The first 32 residues, 1–32, serve as a signal peptide directing secretion; that stretch reads MGWLCPGLTFSVSCLILVWAAGSGVTCVSPGG. Residues 33 to 240 lie on the Extracellular side of the membrane; sequence VRVLEWPICL…NYYEEPLEQR (208 aa). A disulfide bridge links C41 with C51. 2 N-linked (GlcNAc...) asparagine glycosylation sites follow: N60 and N78. C82 and C94 are oxidised to a cystine. 3 N-linked (GlcNAc...) asparagine glycosylation sites follow: N120, N142, and N170. Residues 133-232 enclose the Fibronectin type-III domain; sequence APRNLMVHAN…WSPSVKWLNY (100 aa). The residue at position 172 (S172) is a Phosphoserine. N-linked (GlcNAc...) asparagine glycans are attached at residues N184 and N217. Positions 220 to 224 match the WSXWS motif motif; sequence WSEWS. The chain crosses the membrane as a helical span at residues 241 to 264; that stretch reads LPLGVSISCVVILIICLSCYFGII. Residues 265–830 are Cytoplasmic-facing; it reads RIKKEWWDQI…SPGPACMDTS (566 aa). The short motif at 270 to 278 is the Box 1 motif element; that stretch reads WWDQIPNPA. Residues 378-387 show a composition bias toward acidic residues; the sequence is ENEEEEEEED. Disordered stretches follow at residues 378–403 and 450–488; these read ENEEEEEEEDKGSFCPSPENSGGSFQ and MPWAEFPRVGSPEASSQGKEQPLNPEPSPQATPTQSLAS. A required for IRS1 activation and IL4-induced cell growth region spans residues 444–564; sequence ENASAPMPWA…ETWEQILRQS (121 aa). A Phosphotyrosine modification is found at Y504. 2 disordered regions span residues 508–610 and 623–696; these read STFL…EAGY and CPGT…DGQK. Over residues 518 to 534 the composition is skewed to acidic residues; the sequence is GELDSDPELAEALEEVE. Residues 538 to 551 are compositionally biased toward pro residues; the sequence is PAAPQPSEPPPTLQ. Residues 564-662 are required for IL4-induced gene expression; that stretch reads SVLQRRAAPA…VPTPLFTFGL (99 aa). The span at 570–582 shows a compositional bias: low complexity; the sequence is AAPAPASGPSSSG. 2 positions are modified to phosphotyrosine: Y583 and Y610. The segment covering 623 to 635 has biased composition (polar residues); that stretch reads CPGTSGLEPSSGE. Residue Y638 is modified to Phosphotyrosine. Pro residues-rich tracts occupy residues 646–655 and 665–676; these read PGCPETPVPT and EPPPSPQNPPFP. The short motif at 716–721 is the ITIM motif element; it reads IVYSAL. The segment at 811–830 is disordered; the sequence is SQTPTAVAMLSPGPACMDTS.

The protein belongs to the type I cytokine receptor family. Type 4 subfamily. The functional IL4 receptor is formed by initial binding of IL4 to IL4R. Subsequent recruitment to the complex of the common gamma chain, in immune cells, creates a type I receptor and, in non-immune cells, of IL13RA1 forms a type II receptor. IL4R can also interact with the IL13/IL13RA1 complex to form a similar type II receptor. Interacts with PIK3C3. Interacts with the SH2-containing phosphatases, PTPN6/SHIP1, PTPN11/SHIP2 and INPP5D/SHIP. Interacts with JAK1 through a Box 1-containing region; inhibited by SOCS5. Interacts with SOCS5; inhibits IL4 signaling. Interacts with JAK3. Interacts with CLM1. Interacts with IL13RA2. Post-translationally, on IL4 binding, phosphorylated on C-terminal tyrosine residues.

It localises to the membrane. Functionally, receptor for both interleukin 4 and interleukin 13. Couples to the JAK1/2/3-STAT6 pathway. The IL4 response is involved in promoting Th2 differentiation. The IL4/IL13 responses are involved in regulating IgE production and, chemokine and mucus production at sites of allergic inflammation. In certain cell types, can signal through activation of insulin receptor substrates, IRS1/IRS2. This Sus scrofa (Pig) protein is Interleukin-4 receptor subunit alpha (IL4R).